Consider the following 173-residue polypeptide: Flavodoxin 2 (173 aa).

Residues 3 to 165 (MGLFYGSSTC…RIQSWCEQIL (163 aa)) form the Flavodoxin-like domain.

It belongs to the flavodoxin family. The cofactor is FMN.

In terms of biological role, low-potential electron donor to a number of redox enzymes. This chain is Flavodoxin 2 (fldB), found in Escherichia coli O157:H7.